Reading from the N-terminus, the 1662-residue chain is Putative mediator of RNA polymerase II transcription subunit 23 (1662 aa).

Disordered regions lie at residues 1–24, 95–139, 206–252, and 1530–1572; these read MYTN…PQQQ, QQRP…QSQP, TTTP…STTN, and GYDD…QDTN. Positions 39 to 122 form a coiled coil; sequence QQQNIQQQQQ…QQSQQQQASL (84 aa). Over residues 95 to 124 the composition is skewed to low complexity; that stretch reads QQRPQTPQQNAQQQSQQSQQSQQQQASLGQ. Acidic residues predominate over residues 1532-1560; that stretch reads DDDDDDEDDDYYDEDDEDEDDDNEDDQQD.

Belongs to the Mediator complex subunit 23 family. Component of the Mediator complex.

The protein localises to the nucleus. In terms of biological role, component of the Mediator complex, a coactivator involved in the regulated transcription of nearly all RNA polymerase II-dependent genes. Mediator functions as a bridge to convey information from gene-specific regulatory proteins to the basal RNA polymerase II transcription machinery. Mediator is recruited to promoters by direct interactions with regulatory proteins and serves as a scaffold for the assembly of a functional preinitiation complex with RNA polymerase II and the general transcription factors. The polypeptide is Putative mediator of RNA polymerase II transcription subunit 23 (med23) (Dictyostelium discoideum (Social amoeba)).